The primary structure comprises 239 residues: 4-hydroxy-tetrahydrodipicolinate reductase (239 aa).

Residues aspartate 32, glycine 73 to threonine 75, and alanine 98 to phenylalanine 101 each bind NAD(+). Catalysis depends on histidine 133, which acts as the Proton donor/acceptor. Residue histidine 134 coordinates (S)-2,3,4,5-tetrahydrodipicolinate. Residue lysine 137 is the Proton donor of the active site. Position 143-144 (glycine 143–threonine 144) interacts with (S)-2,3,4,5-tetrahydrodipicolinate.

This sequence belongs to the DapB family.

The protein localises to the cytoplasm. The catalysed reaction is (S)-2,3,4,5-tetrahydrodipicolinate + NAD(+) + H2O = (2S,4S)-4-hydroxy-2,3,4,5-tetrahydrodipicolinate + NADH + H(+). It carries out the reaction (S)-2,3,4,5-tetrahydrodipicolinate + NADP(+) + H2O = (2S,4S)-4-hydroxy-2,3,4,5-tetrahydrodipicolinate + NADPH + H(+). Its pathway is amino-acid biosynthesis; L-lysine biosynthesis via DAP pathway; (S)-tetrahydrodipicolinate from L-aspartate: step 4/4. Its function is as follows. Catalyzes the conversion of 4-hydroxy-tetrahydrodipicolinate (HTPA) to tetrahydrodipicolinate. In Christiangramia forsetii (strain DSM 17595 / CGMCC 1.15422 / KT0803) (Gramella forsetii), this protein is 4-hydroxy-tetrahydrodipicolinate reductase.